A 755-amino-acid chain; its full sequence is Lysosome membrane protein 2-B (755 aa).

At 1-6 (MKHIGR) the chain is on the cytoplasmic side. Residues 7 to 27 (IVSFPIGLVLIAVGIIIFVVV) traverse the membrane as a helical segment. Asn28, Asn76, Asn379, Asn465, Asn497, Asn588, Asn607, and Asn680 each carry an N-linked (GlcNAc...) asparagine glycan. Residues 28-727 (NRTIKDEFKK…AYKVDSFRYA (700 aa)) are Lumenal-facing. A helical transmembrane segment spans residues 728 to 748 (ITVILIVVGGFLSLISGGLFV). Residues 749–755 (LDKIIDL) are Cytoplasmic-facing. The Di-leucine motif motif lies at 752-753 (II).

It belongs to the CD36 family. Post-translationally, heavily glycosylated.

The protein localises to the lysosome membrane. Its function is as follows. May act as a lysosomal receptor. May be involved in macropinocytosis and fluid phase exocytosis. This is Lysosome membrane protein 2-B (lmpB) from Dictyostelium discoideum (Social amoeba).